The following is a 68-amino-acid chain: Dermaseptin-H5 (68 aa).

The N-terminal stretch at 1–17 (KSLFLVLFLGMVSLSIC) is a signal peptide. A propeptide spanning residues 18 to 38 (EEEKRENEDEEKQEDDEQSEM) is cleaved from the precursor. The tract at residues 19-40 (EEKRENEDEEKQEDDEQSEMKR) is disordered. A compositionally biased stretch (acidic residues) spans 25–35 (EDEEKQEDDEQ). A Leucine amide modification is found at L65. Residues 67–68 (EQ) constitute a propeptide that is removed on maturation.

Expressed by the skin glands.

It localises to the secreted. Its function is as follows. Has antibacterial activity against the Gram-negative bacteria E.coli ATCC 11775 (MIC=0.5 uM), and the Gram-positive bacteria S.aureus ATCC 12600 (MIC=0.5 uM) and M.luteus ATCC 49732 (MIC=2.0 uM). Does not inhibit the growth of the fungus C.albicans. Probably acts by disturbing membrane functions with its amphipathic structure. The sequence is that of Dermaseptin-H5 from Pithecopus azureus (Orange-legged monkey tree frog).